A 207-amino-acid chain; its full sequence is Thiamine-phosphate synthase (207 aa).

4-amino-2-methyl-5-(diphosphooxymethyl)pyrimidine contacts are provided by residues 36 to 40 (QLRLK) and Asn68. Mg(2+) contacts are provided by Asp69 and Asp88. Thr107 serves as a coordination point for 4-amino-2-methyl-5-(diphosphooxymethyl)pyrimidine. 134 to 136 (TGT) is a 2-[(2R,5Z)-2-carboxy-4-methylthiazol-5(2H)-ylidene]ethyl phosphate binding site. Lys137 provides a ligand contact to 4-amino-2-methyl-5-(diphosphooxymethyl)pyrimidine. A 2-[(2R,5Z)-2-carboxy-4-methylthiazol-5(2H)-ylidene]ethyl phosphate-binding site is contributed by Gly164.

It belongs to the thiamine-phosphate synthase family. The cofactor is Mg(2+).

It carries out the reaction 2-[(2R,5Z)-2-carboxy-4-methylthiazol-5(2H)-ylidene]ethyl phosphate + 4-amino-2-methyl-5-(diphosphooxymethyl)pyrimidine + 2 H(+) = thiamine phosphate + CO2 + diphosphate. The catalysed reaction is 2-(2-carboxy-4-methylthiazol-5-yl)ethyl phosphate + 4-amino-2-methyl-5-(diphosphooxymethyl)pyrimidine + 2 H(+) = thiamine phosphate + CO2 + diphosphate. The enzyme catalyses 4-methyl-5-(2-phosphooxyethyl)-thiazole + 4-amino-2-methyl-5-(diphosphooxymethyl)pyrimidine + H(+) = thiamine phosphate + diphosphate. Its pathway is cofactor biosynthesis; thiamine diphosphate biosynthesis; thiamine phosphate from 4-amino-2-methyl-5-diphosphomethylpyrimidine and 4-methyl-5-(2-phosphoethyl)-thiazole: step 1/1. Its function is as follows. Condenses 4-methyl-5-(beta-hydroxyethyl)thiazole monophosphate (THZ-P) and 2-methyl-4-amino-5-hydroxymethyl pyrimidine pyrophosphate (HMP-PP) to form thiamine monophosphate (TMP). This chain is Thiamine-phosphate synthase, found in Rhodospirillum centenum (strain ATCC 51521 / SW).